We begin with the raw amino-acid sequence, 375 residues long: MRERGLGEEEIFAELCEARSRDVPYGRVLSSMCTNPHPIAVKAHQEFVNTNLGDPKLFPGTADIEHRCIGLIGDLLHLPAATGYISTGGTESNIQALRTAIQMKHTDRRRANIVVPESAHYSFEKASQMLGIAIRRAPLDDLLRADPSEMAALIDKNTIALVAVAGTTEFGQIDPIEEIGRLAQEHDLYLHVDAAFGGFVIPFMDRPAKFDFEIPGVQSITIDPHKMGLSTIPSGGLLYRSESLMKVLEINAQYLTSMVQTSLAGTRSGASAASAYAVLQYLGRAGYREIVATCMENTRILREQLEDMGMEPIIEPVLNIVTARAKDPVGLRKKLAEKNWYVSTTVHPCALRMVVMPHVTADVIEAFTADLKKVI.

Position 226 is an N6-(pyridoxal phosphate)lysine (Lys226).

It belongs to the group II decarboxylase family. MfnA subfamily. Requires pyridoxal 5'-phosphate as cofactor.

The enzyme catalyses L-tyrosine + H(+) = tyramine + CO2. It carries out the reaction L-aspartate + H(+) = beta-alanine + CO2. It functions in the pathway cofactor biosynthesis; methanofuran biosynthesis. Its pathway is cofactor biosynthesis; coenzyme A biosynthesis. Catalyzes the decarboxylation of L-tyrosine to produce tyramine for methanofuran biosynthesis. Can also catalyze the decarboxylation of L-aspartate to produce beta-alanine for coenzyme A (CoA) biosynthesis. The chain is Probable L-tyrosine/L-aspartate decarboxylase from Methanocella arvoryzae (strain DSM 22066 / NBRC 105507 / MRE50).